A 36-amino-acid chain; its full sequence is Thrombin (36 aa).

Residues 19 to 36 (IVKGIDAEVASAPMQVML) form the Peptidase S1 domain.

The protein belongs to the peptidase S1 family. As to quaternary structure, forms a heterodimer with SERPINA5. In terms of processing, the gamma-carboxyglutamyl residues, which bind calcium ions, result from the carboxylation of glutamyl residues by a microsomal enzyme, the vitamin K-dependent carboxylase. The modified residues are necessary for the calcium-dependent interaction with a negatively charged phospholipid surface, which is essential for the conversion of prothrombin to thrombin. N-glycosylated. As to expression, expressed by the liver and secreted in plasma.

The protein resides in the secreted. The catalysed reaction is Selective cleavage of Arg-|-Gly bonds in fibrinogen to form fibrin and release fibrinopeptides A and B.. Inhibited by SERPINA5. Its function is as follows. Thrombin, which cleaves bonds after Arg and Lys, converts fibrinogen to fibrin and activates factors V, VII, VIII, XIII, and, in complex with thrombomodulin, protein C. Functions in blood homeostasis, inflammation and wound healing. The chain is Thrombin from Salmo salar (Atlantic salmon).